The primary structure comprises 24 residues: Lectin (24 aa).

This sequence belongs to the leguminous lectin family. As to quaternary structure, homotetramer.

Its function is as follows. Agglutinates erythrocytes of blood group A. Binds in decreasing order of affinity: N-acetyl-D-galactosamine, D-galactose, and D-galactosamine. This chain is Lectin, found in Crotalaria pallida (Smooth rattlebox).